Here is a 555-residue protein sequence, read N- to C-terminus: Neurofilament light polypeptide (555 aa).

At Ser2 the chain carries N-acetylserine. Residues 2–93 (SSFSYEPYYS…KSIRTQEKAQ (92 aa)) form a head region. An Asymmetric dimethylarginine; alternate modification is found at Arg23. An Omega-N-methylarginine; alternate modification is found at Arg23. An Omega-N-methylarginine modification is found at Arg30. Tyr43 bears the Phosphotyrosine mark. Phosphoserine is present on residues Ser56, Ser67, and Ser103. The 312-residue stretch at 90–401 (EKAQLQDLND…KLLEGEETRL (312 aa)) folds into the IF rod domain. The coil 1A stretch occupies residues 94 to 125 (LQDLNDRFASFIERVHELEQQNKVLEAELLVL). The tract at residues 126 to 138 (RQKHSEPSRFRAL) is linker 1. The segment at 139 to 234 (YEQEIRDLRL…KVHEEEIAEL (96 aa)) is coil 1B. The segment at 235–253 (QAQIQYAQISVEMDVSSKP) is linker 12. Residues 254-272 (DLSAALKDIRAQYEKLAAK) form a coil 2A region. The interval 273-281 (NMQNAEEWF) is linker 2. The tract at residues 282–397 (KSRFTVLTES…AAYRKLLEGE (116 aa)) is coil 2B. The tract at residues 398–444 (ETRLSFTSVGSLTTGYTQSSQVFGRSAYGGLQTSSYLMSARSFPSYY) is tail, subdomain A. The interval 398-555 (ETRLSFTSVG…GEEQATKKKD (158 aa)) is tail. Residues 445 to 555 (TSHVQEEQIE…GEEQATKKKD (111 aa)) form a tail, subdomain B (acidic) region. The tract at residues 463–555 (KAEEAKDEPP…GEEQATKKKD (93 aa)) is disordered. The segment covering 472–540 (PSEGEAEEEE…ETKEAEEEEK (69 aa)) has biased composition (acidic residues). Residue Ser473 is modified to Phosphoserine. Residue Thr532 is modified to Phosphothreonine. Positions 541 to 555 (KDEGAGEEQATKKKD) are enriched in basic and acidic residues.

It belongs to the intermediate filament family. In terms of assembly, forms homodimers (in vitro). Forms heterodimers with NEFH or NEFM; which can further hetero-oligomerize (in vitro). Forms heterodimers with INA (in vitro). Interacts with ARHGEF28. Interacts with TRIM2. Post-translationally, O-glycosylated. Phosphorylated in the head and rod regions by the PKC kinase PKN1, leading to the inhibition of polymerization. In terms of processing, ubiquitinated in the presence of TRIM2 and UBE2D1.

It localises to the cell projection. It is found in the axon. The protein localises to the cytoplasm. The protein resides in the cytoskeleton. Neurofilaments usually contain three intermediate filament proteins: NEFL, NEFM, and NEFH which are involved in the maintenance of neuronal caliber. May additionally cooperate with the neuronal intermediate filament proteins PRPH and INA to form neuronal filamentous networks. The sequence is that of Neurofilament light polypeptide (NEFL) from Bos taurus (Bovine).